The primary structure comprises 178 residues: Large ribosomal subunit protein uL10 (178 aa).

The protein belongs to the universal ribosomal protein uL10 family. As to quaternary structure, part of the ribosomal stalk of the 50S ribosomal subunit. The N-terminus interacts with L11 and the large rRNA to form the base of the stalk. The C-terminus forms an elongated spine to which L12 dimers bind in a sequential fashion forming a multimeric L10(L12)X complex.

Forms part of the ribosomal stalk, playing a central role in the interaction of the ribosome with GTP-bound translation factors. The polypeptide is Large ribosomal subunit protein uL10 (Dictyoglomus thermophilum (strain ATCC 35947 / DSM 3960 / H-6-12)).